The primary structure comprises 211 residues: Probable nicotinate-nucleotide adenylyltransferase (211 aa).

It belongs to the NadD family.

It carries out the reaction nicotinate beta-D-ribonucleotide + ATP + H(+) = deamido-NAD(+) + diphosphate. Its pathway is cofactor biosynthesis; NAD(+) biosynthesis; deamido-NAD(+) from nicotinate D-ribonucleotide: step 1/1. Its function is as follows. Catalyzes the reversible adenylation of nicotinate mononucleotide (NaMN) to nicotinic acid adenine dinucleotide (NaAD). The sequence is that of Probable nicotinate-nucleotide adenylyltransferase from Shewanella sediminis (strain HAW-EB3).